The chain runs to 101 residues: MAKTSAVEKNKRRRKLVANHAAKRAVLKAIIMNQSLPIEERFKATLKLAELPRDGSKTRIRNRCEVTGRPRAYYRKLRMSRIALRELGNLGKVPGVVKSSW.

It belongs to the universal ribosomal protein uS14 family. As to quaternary structure, part of the 30S ribosomal subunit. Contacts proteins S3 and S10.

Functionally, binds 16S rRNA, required for the assembly of 30S particles and may also be responsible for determining the conformation of the 16S rRNA at the A site. The sequence is that of Small ribosomal subunit protein uS14 from Rhizobium meliloti (strain 1021) (Ensifer meliloti).